A 49-amino-acid chain; its full sequence is Large ribosomal subunit protein bL33B (49 aa).

It belongs to the bacterial ribosomal protein bL33 family.

The sequence is that of Large ribosomal subunit protein bL33B (rpmG2) from Listeria innocua serovar 6a (strain ATCC BAA-680 / CLIP 11262).